Reading from the N-terminus, the 234-residue chain is Leucyl/phenylalanyl-tRNA--protein transferase (234 aa).

The protein belongs to the L/F-transferase family.

Its subcellular location is the cytoplasm. It carries out the reaction N-terminal L-lysyl-[protein] + L-leucyl-tRNA(Leu) = N-terminal L-leucyl-L-lysyl-[protein] + tRNA(Leu) + H(+). The catalysed reaction is N-terminal L-arginyl-[protein] + L-leucyl-tRNA(Leu) = N-terminal L-leucyl-L-arginyl-[protein] + tRNA(Leu) + H(+). It catalyses the reaction L-phenylalanyl-tRNA(Phe) + an N-terminal L-alpha-aminoacyl-[protein] = an N-terminal L-phenylalanyl-L-alpha-aminoacyl-[protein] + tRNA(Phe). Functionally, functions in the N-end rule pathway of protein degradation where it conjugates Leu, Phe and, less efficiently, Met from aminoacyl-tRNAs to the N-termini of proteins containing an N-terminal arginine or lysine. In Salmonella paratyphi A (strain ATCC 9150 / SARB42), this protein is Leucyl/phenylalanyl-tRNA--protein transferase.